The sequence spans 798 residues: MGFDSPRGRGGGGFRGGRGGGSGFTPRGGGGGFRGGDRGRSPGGFRGGDRGRSSSGFRGGDRGRSPGGFRGDREGGFSPRGRGGGFRGGDRGGFRGGDRGGSPWRGGDRGNFRGGDRGGSPWRGGDRGVANRGRGDFSGGSRGGNKFSPRGGGRGGFTPRGRGGNDFSPRGGRGNFQSRGGGSRVGFSDKRKQYDSDGDDDEEEEVPKKKLATGTPFAKQTKPVEDDSGEDEEDEEESDEEPQPPKKTAKSAIATAAEDSDDDEEDDDEEEEESDDDAPQVKKSVAVEEDEEDEEDEEEIEMDEEDEEEEEDEEETEPVAKTPAVKSSLKSVDSTKGKQVNLSKVATPTTVDKKAPATPHPAKTSKNAAGDVPKLNFDDDSDEEDEEDEEVEEEDEEEEEEEEDVPAKKAPVLKQSLSQIAQAIEEDSDDEDEDEEEEEDEEDEEEEEDTTNVPLIKSKADLLKQIAANRAAASAAQDSDEDEDEEDEEDVEEEDEEEEEEEDIPAVKPKVTEKQGGVKRKLDEPTVASKQVKSDGKSIISEEERRRQDRDSRSLFIKEIAKKAKDAEITGLVTGLDSFRRKKNSNFGWLVFNTVADCKKAHDVLSKSKIQGKALYVDFCLSESKAPKEHGVRPINPLQLFINALPGTCNNTDLKNIFRSSTDIKILHASGQPNSKKRAFITFGTVEDAQAAFAKSNGLKVNNHLVDVFYARHQETKVDVKPKKAATPAVQKKIVPKVAADSSGDDSEEVASSDEGIQEVEEEQPKQKKLVKKVEPKTIPRVQQKKPQFKKTGFKGKK.

Residues 1 to 548 (MGFDSPRGRG…IISEEERRRQ (548 aa)) are disordered. Over residues 8–34 (GRGGGGFRGGRGGGSGFTPRGGGGGFR) the composition is skewed to gly residues. Composition is skewed to basic and acidic residues over residues 59–75 (GGDR…DREG), 88–98 (GGDRGGFRGGD), and 106–116 (GGDRGNFRGGD). Composition is skewed to gly residues over residues 150–164 (RGGG…GRGG) and 171–184 (GGRG…GGSR). Acidic residues-rich tracts occupy residues 196-205 (SDGDDDEEEE), 226-242 (DDSG…DEEP), 258-278 (EDSD…DDDA), and 287-317 (VEED…EETE). Residues 328–350 (SLKSVDSTKGKQVNLSKVATPTT) are compositionally biased toward polar residues. Acidic residues-rich tracts occupy residues 378–404 (DDDS…EEED) and 424–450 (IEED…EEDT). Low complexity predominate over residues 467 to 476 (AANRAAASAA). Positions 478–504 (DSDEDEDEEDEEDVEEEDEEEEEEEDI) are enriched in acidic residues. Residues 532–548 (VKSDGKSIISEEERRRQ) are compositionally biased toward basic and acidic residues. Residues 638–713 (LQLFINALPG…HLVDVFYARH (76 aa)) form the RRM domain. The interval 736-798 (PKVAADSSGD…FKKTGFKGKK (63 aa)) is disordered. The span at 743 to 762 (SGDDSEEVASSDEGIQEVEE) shows a compositional bias: acidic residues. Residues 783 to 798 (QQKKPQFKKTGFKGKK) show a composition bias toward basic residues.

As to quaternary structure, identified in an mRNP granule complex containing untranslated mRNAs.

It localises to the nucleus. The protein resides in the nucleolus. Nucleolin is the major nucleolar protein of growing eukaryotic cells. It is found associated with intranucleolar chromatin and pre-ribosomal particles. It induces chromatin decondensation by binding to histone H1. It is thought to play a role in pre-rRNA transcription and ribosome assembly. May play a role in the process of transcriptional elongation. Involved in phase separation into sub-nucleolar condensates. The chain is Nucleolin homolog 1 from Caenorhabditis elegans.